The chain runs to 640 residues: tRNA-dihydrouridine(47) synthase [NAD(P)(+)]-like (640 aa).

Polar residues predominate over residues 1–11; that stretch reads MAESEGSNTEN. 2 disordered regions span residues 1 to 23 and 43 to 123; these read MAES…ENLD and FIDA…HSQF. Over residues 43-57 the composition is skewed to basic and acidic residues; the sequence is FIDADGKDVTEKETC. The segment covering 58-72 has biased composition (polar residues); it reads SELSLNDAENTTRTE. Over residues 77 to 86 the composition is skewed to basic and acidic residues; it reads PEAKRIKLDD. Positions 104 to 120 are enriched in basic residues; sequence EKKRARGQNKSRPHMKH. C3H1-type zinc fingers lie at residues 123-153 and 161-191; these read FEEN…HDVA and EDIR…HLGE. FMN contacts are provided by residues 301–303 and Q355; that span reads PLT. Residue C386 is the Proton donor of the active site. FMN contacts are provided by residues K425, H455, 487 to 489, and 510 to 511; these read NGD and AR.

This sequence belongs to the Dus family. Dus3 subfamily. Requires FMN as cofactor.

The enzyme catalyses 5,6-dihydrouridine(47) in tRNA + NAD(+) = uridine(47) in tRNA + NADH + H(+). It catalyses the reaction 5,6-dihydrouridine(47) in tRNA + NADP(+) = uridine(47) in tRNA + NADPH + H(+). The catalysed reaction is a 5,6-dihydrouridine in mRNA + NAD(+) = a uridine in mRNA + NADH + H(+). It carries out the reaction a 5,6-dihydrouridine in mRNA + NADP(+) = a uridine in mRNA + NADPH + H(+). Its function is as follows. Catalyzes the synthesis of dihydrouridine, a modified base, in various RNAs, such as tRNAs, mRNAs and some long non-coding RNAs (lncRNAs). Mainly modifies the uridine in position 47 (U47) in the D-loop of most cytoplasmic tRNAs. Also able to mediate the formation of dihydrouridine in some mRNAs, thereby regulating their translation. This is tRNA-dihydrouridine(47) synthase [NAD(P)(+)]-like (dus3l) from Xenopus laevis (African clawed frog).